Reading from the N-terminus, the 347-residue chain is Ribosomal RNA large subunit methyltransferase M (347 aa).

Residues Ser184, 217-220 (APGG), Asp236, Asp256, and Asp272 each bind S-adenosyl-L-methionine. Catalysis depends on Lys301, which acts as the Proton acceptor.

Belongs to the class I-like SAM-binding methyltransferase superfamily. RNA methyltransferase RlmE family. RlmM subfamily. In terms of assembly, monomer.

Its subcellular location is the cytoplasm. The catalysed reaction is cytidine(2498) in 23S rRNA + S-adenosyl-L-methionine = 2'-O-methylcytidine(2498) in 23S rRNA + S-adenosyl-L-homocysteine + H(+). Functionally, catalyzes the 2'-O-methylation at nucleotide C2498 in 23S rRNA. The sequence is that of Ribosomal RNA large subunit methyltransferase M from Xanthomonas euvesicatoria pv. vesicatoria (strain 85-10) (Xanthomonas campestris pv. vesicatoria).